Reading from the N-terminus, the 102-residue chain is Small ribosomal subunit protein uS10 (102 aa).

It belongs to the universal ribosomal protein uS10 family. As to quaternary structure, part of the 30S ribosomal subunit.

Its function is as follows. Involved in the binding of tRNA to the ribosomes. The chain is Small ribosomal subunit protein uS10 from Pelobacter propionicus (strain DSM 2379 / NBRC 103807 / OttBd1).